A 225-amino-acid chain; its full sequence is Small ribosomal subunit protein eS1 (225 aa).

This sequence belongs to the eukaryotic ribosomal protein eS1 family.

This Methanococcus maripaludis (strain C6 / ATCC BAA-1332) protein is Small ribosomal subunit protein eS1.